A 689-amino-acid chain; its full sequence is Glycine--tRNA ligase beta subunit (689 aa).

Belongs to the class-II aminoacyl-tRNA synthetase family. Tetramer of two alpha and two beta subunits.

The protein localises to the cytoplasm. It catalyses the reaction tRNA(Gly) + glycine + ATP = glycyl-tRNA(Gly) + AMP + diphosphate. This chain is Glycine--tRNA ligase beta subunit, found in Klebsiella pneumoniae subsp. pneumoniae (strain ATCC 700721 / MGH 78578).